A 149-amino-acid chain; its full sequence is Large-conductance mechanosensitive channel (149 aa).

3 helical membrane-spanning segments follow: residues 16 to 36, 40 to 60, and 89 to 109; these read VMDLAVGVIIGGAFSTIVNSV, LIMPVVGVATGGLDFSNKFIL, and GSFITVAINFVILALIIFMMV.

Belongs to the MscL family. Homopentamer.

The protein resides in the cell inner membrane. In terms of biological role, channel that opens in response to stretch forces in the membrane lipid bilayer. May participate in the regulation of osmotic pressure changes within the cell. This Paraburkholderia phymatum (strain DSM 17167 / CIP 108236 / LMG 21445 / STM815) (Burkholderia phymatum) protein is Large-conductance mechanosensitive channel.